The sequence spans 62 residues: Small ribosomal subunit protein uS14 (62 aa).

Zn(2+) is bound by residues cysteine 25, cysteine 28, cysteine 41, and cysteine 44.

It belongs to the universal ribosomal protein uS14 family. Zinc-binding uS14 subfamily. Part of the 30S ribosomal subunit. Contacts proteins S3 and S10. The cofactor is Zn(2+).

In terms of biological role, binds 16S rRNA, required for the assembly of 30S particles and may also be responsible for determining the conformation of the 16S rRNA at the A site. This chain is Small ribosomal subunit protein uS14, found in Persephonella marina (strain DSM 14350 / EX-H1).